Reading from the N-terminus, the 182-residue chain is Orotate phosphoribosyltransferase (182 aa).

5-phospho-alpha-D-ribose 1-diphosphate contacts are provided by residues arginine 93, lysine 94, lysine 97, and 119–127 (EDIATTGTS). Positions 123 and 151 each coordinate orotate.

The protein belongs to the purine/pyrimidine phosphoribosyltransferase family. PyrE subfamily. Homodimer. The cofactor is Mg(2+).

The catalysed reaction is orotidine 5'-phosphate + diphosphate = orotate + 5-phospho-alpha-D-ribose 1-diphosphate. It functions in the pathway pyrimidine metabolism; UMP biosynthesis via de novo pathway; UMP from orotate: step 1/2. In terms of biological role, catalyzes the transfer of a ribosyl phosphate group from 5-phosphoribose 1-diphosphate to orotate, leading to the formation of orotidine monophosphate (OMP). The chain is Orotate phosphoribosyltransferase from Haloquadratum walsbyi (strain DSM 16790 / HBSQ001).